The chain runs to 228 residues: Protein CWC15 homolog A (228 aa).

A disordered region spans residues 1–126; sequence MTTAARPTFE…DEDSDDDTAA (126 aa). Residues 24–34 are compositionally biased toward polar residues; that stretch reads SQLSKQYSSRD. The span at 52–84 shows a compositional bias: basic and acidic residues; that stretch reads EEVRSRDFRRELEERERVVARDKNRDRPTREHT. A compositionally biased stretch (acidic residues) spans 102–124; that stretch reads DADDPLTDEDGDEDSDEDSDDDT. A coiled-coil region spans residues 121 to 165; it reads DDDTAALLAELEKIKKERAEEKDRKELEQKAEEERIRMENILSGN.

This sequence belongs to the CWC15 family. As to quaternary structure, identified in the spliceosome C complex. Component of the minor spliceosome, which splices U12-type introns.

Its subcellular location is the nucleus. Its function is as follows. Involved in pre-mRNA splicing as component of the spliceosome. The protein is Protein CWC15 homolog A (cwc15-a) of Xenopus laevis (African clawed frog).